The sequence spans 228 residues: UPF0328 protein ECU07_0040 (228 aa).

It belongs to the UPF0328 family.

The polypeptide is UPF0328 protein ECU07_0040 (Encephalitozoon cuniculi (strain GB-M1) (Microsporidian parasite)).